The primary structure comprises 175 residues: Co-chaperone protein HscB homolog (175 aa).

The J domain occupies 7-79; the sequence is SHFDLFHLPA…LKRATYLLHL (73 aa).

The protein belongs to the HscB family. Interacts with HscA and stimulates its ATPase activity.

In terms of biological role, co-chaperone involved in the maturation of iron-sulfur cluster-containing proteins. Seems to help targeting proteins to be folded toward HscA. The sequence is that of Co-chaperone protein HscB homolog from Burkholderia mallei (strain ATCC 23344).